The sequence spans 446 residues: Saccharopine dehydrogenase [NADP(+), L-glutamate-forming] (446 aa).

Residues 10–13, 33–35, 54–55, isoleucine 75, 97–98, 124–126, and serine 174 contribute to the NADP(+) site; these read SGFV, CRT, DV, SS, and LDP. L-saccharopine is bound by residues 98–99 and aspartate 125; that span reads SY. L-saccharopine is bound by residues arginine 223 and 244–246; that span reads TLR.

The protein belongs to the saccharopine dehydrogenase family. Interacts with TRM112.

It carries out the reaction L-saccharopine + NADP(+) + H2O = (S)-2-amino-6-oxohexanoate + L-glutamate + NADPH + H(+). Its pathway is amino-acid biosynthesis; L-lysine biosynthesis via AAA pathway; L-lysine from L-alpha-aminoadipate (fungal route): step 2/3. The protein is Saccharopine dehydrogenase [NADP(+), L-glutamate-forming] (LYS9) of Saccharomyces cerevisiae (strain ATCC 204508 / S288c) (Baker's yeast).